The primary structure comprises 1423 residues: Protein phosphatase Slingshot homolog 2 (1423 aa).

Disordered stretches follow at residues 1 to 37 and 51 to 70; these read MALVTVQRSPTPSTTSSPCASEADSGEEECRSQPRSI and LPRGNGSSTPRVSHRRNKHA. The span at 9–18 shows a compositional bias: low complexity; sequence SPTPSTTSSP. A phosphoserine mark is found at Ser17, Ser25, and Ser36. Positions 248–303 constitute a DEK-C domain; the sequence is ERTERLIKTKLREIMMQKDLENITSKEIRTELEMQMVCNLREFKEFIDNEMIVILG. Positions 307–448 constitute a Tyrosine-protein phosphatase domain; the sequence is SPTQIFEHVF…LEEYQGILLA (142 aa). Cys392 acts as the Phosphocysteine intermediate in catalysis. Residues Ser461, Ser487, Ser534, Ser631, and Ser633 each carry the phosphoserine modification. Disordered stretches follow at residues 698–725, 833–858, 878–950, 967–991, 1021–1042, 1074–1105, and 1207–1226; these read EMAADDQRSSSLSNTPHASEESSVDEDQ, HSSTADLEEEEPVEGEHDWGPGMHSG, RQEQ…HCER, APQDCLGSDSRSKKQEGDLKKQRAV, SLGHTEPGGEATPSKEGEKQGL, PQVLPLPHSSSECDRPADPNPMLSSPQDKGDC, and PEACRIPHSSSSENIRDLSH. Residues 884 to 904 are compositionally biased toward polar residues; that stretch reads HGTASAGPTLSNRKNSKNDSS. Basic and acidic residues-rich tracts occupy residues 910–932, 976–987, and 1033–1042; these read PKWKSDETTPEHSFFLKEAEPSK, SRSKKQEGDLKK, and PSKEGEKQGL. Ser1217 is modified (phosphoserine). A Phosphothreonine modification is found at Thr1422.

It belongs to the protein-tyrosine phosphatase family. In terms of assembly, interacts with filamentous actin. In terms of tissue distribution, expressed in brain, heart, liver, skeletal muscle, testis and thymus. Also expressed at lower levels in kidney, small intestine and spleen. Within testicular seminiferous tubules expressed in germ cells and spermatocytes, where it has a cytoplasmic localization, and round spermatids, where it concentrates in the acrosomal region next to the nucleus.

It is found in the cytoplasm. It localises to the cytoskeleton. Its subcellular location is the cell junction. The protein resides in the focal adhesion. The protein localises to the cytoplasmic vesicle. It is found in the secretory vesicle. It localises to the acrosome. It catalyses the reaction O-phospho-L-tyrosyl-[protein] + H2O = L-tyrosyl-[protein] + phosphate. The enzyme catalyses O-phospho-L-seryl-[protein] + H2O = L-seryl-[protein] + phosphate. The catalysed reaction is O-phospho-L-threonyl-[protein] + H2O = L-threonyl-[protein] + phosphate. In terms of biological role, protein phosphatase which regulates actin filament dynamics. Dephosphorylates and activates the actin binding/depolymerizing factor cofilin, which subsequently binds to actin filaments and stimulates their disassembly. Inhibitory phosphorylation of cofilin is mediated by LIMK1, which may also be dephosphorylated and inactivated by this protein. Required for spermatogenesis. Involved in acrosome biogenesis, probably by regulating cofilin-mediated actin cytoskeleton remodeling during proacrosomal vesicle fusion and/or Golgi to perinuclear vesicle trafficking. The chain is Protein phosphatase Slingshot homolog 2 (Ssh2) from Mus musculus (Mouse).